Here is a 361-residue protein sequence, read N- to C-terminus: D-amino-acid oxidase (361 aa).

A signal peptide spans 1 to 22 (MSNTIVVVGAGVIGLTSALLLS). Alanine 10, isoleucine 13, lysine 34, histidine 35, alanine 45, serine 46, glycine 50, and asparagine 52 together coordinate FAD. N-linked (GlcNAc...) asparagine glycosylation is found at asparagine 193 and asparagine 222. (R)-lactate contacts are provided by tyrosine 242, tyrosine 258, and arginine 305. Residues tyrosine 242, tyrosine 258, and arginine 305 each contribute to the anthranilate site. Residues arginine 305, serine 332, glycine 335, tyrosine 336, and glutamine 337 each coordinate FAD. A Microbody targeting signal motif is present at residues 359–361 (SKL).

It belongs to the DAMOX/DASOX family. Requires FAD as cofactor. Post-translationally, the N-terminus is blocked.

It is found in the peroxisome matrix. The enzyme catalyses a D-alpha-amino acid + O2 + H2O = a 2-oxocarboxylate + H2O2 + NH4(+). In terms of biological role, catalyzes the oxidative deamination of D-amino acids with broad substrate specificity. Enables the organism to utilize D-amino acids as a source of nutrients. This chain is D-amino-acid oxidase, found in Fusarium vanettenii (Neocosmospora pisi).